A 120-amino-acid polypeptide reads, in one-letter code: Basic phospholipase A2 homolog piratoxin-3 (120 aa).

7 disulfides stabilise this stretch: Cys-26–Cys-113, Cys-28–Cys-44, Cys-43–Cys-94, Cys-49–Cys-120, Cys-50–Cys-87, Cys-57–Cys-81, and Cys-75–Cys-85. The segment at 104-115 (KKYRYHLKPCKK) is important for membrane-damaging activities in eukaryotes and bacteria; heparin-binding.

This sequence belongs to the phospholipase A2 family. Group II subfamily. D49 sub-subfamily. Homodimer; non-covalently linked (probable alternative/compact dimer conformation). As to expression, expressed by the venom gland.

It localises to the secreted. In terms of biological role, snake venom phospholipase A2 (PLA2) that lacks enzymatic activity. Shows high myotoxin activities. Also has anticoagulant activity. A model of myotoxic mechanism has been proposed: an apo Lys49-PLA2 is activated by the entrance of a hydrophobic molecule (e.g. fatty acid) at the hydrophobic channel of the protein leading to a reorientation of a monomer. This reorientation causes a transition between 'inactive' to 'active' states, causing alignment of C-terminal and membrane-docking sites (MDoS) side-by-side and putting the membrane-disruption sites (MDiS) in the same plane, exposed to solvent and in a symmetric position for both monomers. The MDoS region stabilizes the toxin on membrane by the interaction of charged residues with phospholipid head groups. Subsequently, the MDiS region destabilizes the membrane with penetration of hydrophobic residues. This insertion causes a disorganization of the membrane, allowing an uncontrolled influx of ions (i.e. calcium and sodium), and eventually triggering irreversible intracellular alterations and cell death. This chain is Basic phospholipase A2 homolog piratoxin-3, found in Bothrops pirajai (Piraja's lancehead).